The following is a 135-amino-acid chain: MIVGIGSDLCDIRRIERSLERFGERFTQRVFTPGERARSDRRAARAPSYARRFAAKEACAKALGTGLSQGVFWRDMEVVNLPSGAPTLRLTGGAAARLAALVPPGHRARLHVSLTDDPPLAQAFVVIEALRDESC.

Residues Asp-8 and Glu-57 each contribute to the Mg(2+) site.

This sequence belongs to the P-Pant transferase superfamily. AcpS family. Requires Mg(2+) as cofactor.

The protein localises to the cytoplasm. The catalysed reaction is apo-[ACP] + CoA = holo-[ACP] + adenosine 3',5'-bisphosphate + H(+). In terms of biological role, transfers the 4'-phosphopantetheine moiety from coenzyme A to a Ser of acyl-carrier-protein. The polypeptide is Holo-[acyl-carrier-protein] synthase (Methylobacterium sp. (strain 4-46)).